The following is a 547-amino-acid chain: Large cysteine-rich periplasmic protein OmcB, serovar E (547 aa).

Residues 1 to 22 form the signal peptide; the sequence is MNKLIRRAVTIFAVTSVASLFA. Positions 23–40 are excised as a propeptide; it reads SGVLETSMAESLSTNVIS. A disordered region spans residues 46-83; sequence AKDNTSHKSKKARKNHSKETLVDRKEVAPVHESKATGP. Residues 52–61 show a composition bias toward basic residues; it reads HKSKKARKNH. The span at 62-79 shows a compositional bias: basic and acidic residues; the sequence is SKETLVDRKEVAPVHESK.

As to quaternary structure, part of a disulfide cross-linked outer membrane complex (COMC) composed of the major outer membrane porin (MOMP), the small cysteine-rich protein (OmcA) and the large cysteine-rich periplasmic protein (OmcB).

It is found in the periplasm. In terms of biological role, in elementary bodies (EBs, the infectious stage, which is able to survive outside the host cell) provides the structural integrity of the outer envelope through disulfide cross-links with the small cysteine-rich protein and the major outer membrane protein. It has been described in publications as the Sarkosyl-insoluble COMC (Chlamydia outer membrane complex), and serves as the functional equivalent of peptidoglycan. The chain is Large cysteine-rich periplasmic protein OmcB, serovar E (omcB) from Chlamydia trachomatis.